The primary structure comprises 332 residues: Tetraacyldisaccharide 4'-kinase (332 aa).

Residue 55–62 (GVGGSGKT) coordinates ATP.

The protein belongs to the LpxK family.

The catalysed reaction is a lipid A disaccharide + ATP = a lipid IVA + ADP + H(+). It functions in the pathway glycolipid biosynthesis; lipid IV(A) biosynthesis; lipid IV(A) from (3R)-3-hydroxytetradecanoyl-[acyl-carrier-protein] and UDP-N-acetyl-alpha-D-glucosamine: step 6/6. Its function is as follows. Transfers the gamma-phosphate of ATP to the 4'-position of a tetraacyldisaccharide 1-phosphate intermediate (termed DS-1-P) to form tetraacyldisaccharide 1,4'-bis-phosphate (lipid IVA). This chain is Tetraacyldisaccharide 4'-kinase, found in Acidithiobacillus ferrooxidans (strain ATCC 53993 / BNL-5-31) (Leptospirillum ferrooxidans (ATCC 53993)).